A 95-amino-acid chain; its full sequence is Small ribosomal subunit protein uS19 (95 aa).

Positions 76 to 95 (PTRTFRGHGGKKADKRGKLK) are disordered. Residues 80–95 (FRGHGGKKADKRGKLK) are compositionally biased toward basic residues.

Belongs to the universal ribosomal protein uS19 family.

In terms of biological role, protein S19 forms a complex with S13 that binds strongly to the 16S ribosomal RNA. The polypeptide is Small ribosomal subunit protein uS19 (Herpetosiphon aurantiacus (strain ATCC 23779 / DSM 785 / 114-95)).